The primary structure comprises 273 residues: Chaperone protein PsaB (273 aa).

The first 31 residues, 1–31, serve as a signal peptide directing secretion; it reads MKNLFFSAYKKVFSYITSIVIFMVSLPYAYS. The cysteines at positions 128 and 163 are disulfide-linked.

The protein belongs to the periplasmic pilus chaperone family.

The protein localises to the periplasm. Functionally, required for the biogenesis of the pH 6 antigen. The protein is Chaperone protein PsaB (psaB) of Yersinia pestis.